We begin with the raw amino-acid sequence, 224 residues long: Deoxyribose-phosphate aldolase (224 aa).

Residue aspartate 92 is the Proton donor/acceptor of the active site. The active-site Schiff-base intermediate with acetaldehyde is lysine 155. Lysine 184 acts as the Proton donor/acceptor in catalysis.

This sequence belongs to the DeoC/FbaB aldolase family. DeoC type 1 subfamily.

Its subcellular location is the cytoplasm. It catalyses the reaction 2-deoxy-D-ribose 5-phosphate = D-glyceraldehyde 3-phosphate + acetaldehyde. The protein operates within carbohydrate degradation; 2-deoxy-D-ribose 1-phosphate degradation; D-glyceraldehyde 3-phosphate and acetaldehyde from 2-deoxy-alpha-D-ribose 1-phosphate: step 2/2. In terms of biological role, catalyzes a reversible aldol reaction between acetaldehyde and D-glyceraldehyde 3-phosphate to generate 2-deoxy-D-ribose 5-phosphate. The sequence is that of Deoxyribose-phosphate aldolase from Halalkalibacterium halodurans (strain ATCC BAA-125 / DSM 18197 / FERM 7344 / JCM 9153 / C-125) (Bacillus halodurans).